Reading from the N-terminus, the 342-residue chain is Biotin synthase (342 aa).

The region spanning Asn55–Lys274 is the Radical SAM core domain. [4Fe-4S] cluster contacts are provided by Cys70, Cys74, and Cys77. Residues Cys114, Cys145, Cys205, and Arg278 each coordinate [2Fe-2S] cluster.

Belongs to the radical SAM superfamily. Biotin synthase family. Homodimer. [4Fe-4S] cluster serves as cofactor. Requires [2Fe-2S] cluster as cofactor.

It carries out the reaction (4R,5S)-dethiobiotin + (sulfur carrier)-SH + 2 reduced [2Fe-2S]-[ferredoxin] + 2 S-adenosyl-L-methionine = (sulfur carrier)-H + biotin + 2 5'-deoxyadenosine + 2 L-methionine + 2 oxidized [2Fe-2S]-[ferredoxin]. It functions in the pathway cofactor biosynthesis; biotin biosynthesis; biotin from 7,8-diaminononanoate: step 2/2. Catalyzes the conversion of dethiobiotin (DTB) to biotin by the insertion of a sulfur atom into dethiobiotin via a radical-based mechanism. In Rhodopseudomonas palustris (strain BisB5), this protein is Biotin synthase.